The chain runs to 328 residues: Cysteine proteinase COT44 (328 aa).

Positions 1-99 (MSIYLRWSLE…KYSAAVNVDE (99 aa)) are cleaved as a propeptide — activation peptide. Asn-48 and Asn-60 each carry an N-linked (GlcNAc...) asparagine glycan. Disulfide bonds link Cys-121–Cys-163, Cys-155–Cys-196, and Cys-254–Cys-305. Cys-124 is an active-site residue. Catalysis depends on residues His-260 and Asn-280.

The protein belongs to the peptidase C1 family. As to expression, present in both cotyledons and axes.

In terms of biological role, may function in an early event in cortical cell differentiation. The protein is Cysteine proteinase COT44 of Brassica napus (Rape).